The following is a 264-amino-acid chain: Polyneuridine aldehyde esterase (264 aa).

A propeptide spanning residues methionine 1–asparagine 6 is cleaved from the precursor. The region spanning histidine 12–threonine 122 is the AB hydrolase-1 domain. Residues serine 87, aspartate 216, and histidine 244 contribute to the active site. Serine 87 is a 16-epivellosimine binding site.

It belongs to the AB hydrolase superfamily. As to quaternary structure, homodimer; homodimerizes in aqueous solutions at pH 7.0. In terms of tissue distribution, mainly expressed in roots and, to a lower level, in leaves.

It carries out the reaction polyneuridine aldehyde + H2O = 16-epivellosimine + methanol + CO2. The protein operates within alkaloid biosynthesis; ajmaline biosynthesis. Inhibited by DEPC and HgCl(2). In terms of biological role, hydrolase involved in the biosynthesis of ajmaline-type monoterpenoid indole alkaloids (MIAs) natural products, important plant-derived pharmaceuticals used in the therapy of heart disorders. Catalyzes the hydrolysis of polyneuridine aldehyde into epi-vellosimine, precursor of vomilenine, an intermediate chemical in the biosynthesis of ajmaline. This Rauvolfia serpentina (Serpentine wood) protein is Polyneuridine aldehyde esterase.